Reading from the N-terminus, the 177-residue chain is Peptide deformylase 2 (177 aa).

2 residues coordinate Fe cation: cysteine 99 and histidine 141. The active site involves glutamate 142. Residue histidine 145 participates in Fe cation binding.

Belongs to the polypeptide deformylase family. The cofactor is Fe(2+).

It carries out the reaction N-terminal N-formyl-L-methionyl-[peptide] + H2O = N-terminal L-methionyl-[peptide] + formate. Functionally, removes the formyl group from the N-terminal Met of newly synthesized proteins. Requires at least a dipeptide for an efficient rate of reaction. N-terminal L-methionine is a prerequisite for activity but the enzyme has broad specificity at other positions. This is Peptide deformylase 2 from Ralstonia nicotianae (strain ATCC BAA-1114 / GMI1000) (Ralstonia solanacearum).